Here is a 509-residue protein sequence, read N- to C-terminus: Methylmalonyl-CoA decarboxylase subunit alpha (509 aa).

Residues 4–260 (VQEKIELLHE…NNMEDAPLVD (257 aa)) form the CoA carboxyltransferase N-terminal domain. A CoA carboxyltransferase C-terminal domain is found at 267–503 (REDESLNSLL…SKRENRAPKK (237 aa)).

Belongs to the AccD/PCCB family. In terms of assembly, the methylmalonyl-CoA decarboxylase is composed of five subunits: the carboxyltransferase alpha subunit (MmdA), the tunnel beta subunit (MmdB), the biotin-containing gamma subunit (MmdC), and the delta (MmdD) and epsilon (MmdE) subunits. Interacts with the gamma subunit.

It localises to the cell membrane. It carries out the reaction (S)-methylmalonyl-CoA + Na(+)(in) + H(+)(out) = propanoyl-CoA + Na(+)(out) + CO2. Completely inhibited by avidin. Its function is as follows. Carboxyltransferase subunit of the sodium ion pump methylmalonyl-CoA decarboxylase, which converts the chemical energy of a decarboxylation reaction into an electrochemical gradient of Na(+) ions across the cytoplasmic membrane, thereby creating a sodium ion motive force that is used for ATP synthesis. The alpha subunit catalyzes the Na(+)-independent carboxyltransfer from methylmalonyl-CoA to the prosthetic biotin group located on the gamma subunit. Can also convert malonyl-CoA into acetyl-CoA. In Veillonella parvula (Staphylococcus parvulus), this protein is Methylmalonyl-CoA decarboxylase subunit alpha.